The sequence spans 359 residues: Peptide chain release factor 1 (359 aa).

An N5-methylglutamine modification is found at Gln235. Residues 283-309 (QKAESERSQARRSQVGSGDRSERIRTY) form a disordered region.

This sequence belongs to the prokaryotic/mitochondrial release factor family. Post-translationally, methylated by PrmC. Methylation increases the termination efficiency of RF1.

It localises to the cytoplasm. In terms of biological role, peptide chain release factor 1 directs the termination of translation in response to the peptide chain termination codons UAG and UAA. The protein is Peptide chain release factor 1 of Brucella suis (strain ATCC 23445 / NCTC 10510).